The chain runs to 194 residues: Holliday junction branch migration complex subunit RuvA (194 aa).

Residues 1–62 (MIGYLKGNVI…EDSLDLYGFK (62 aa)) are domain I. Positions 63–136 (TMEERELFET…KGKLKDMSGD (74 aa)) are domain II. The tract at residues 136 to 140 (DFEEP) is flexible linker. The tract at residues 141 to 194 (LPDNRNTELSDALASLGYSELEIEEALSNADIKNNGSLEENIKKALGYLGSKGS) is domain III.

Belongs to the RuvA family. Homotetramer. Forms an RuvA(8)-RuvB(12)-Holliday junction (HJ) complex. HJ DNA is sandwiched between 2 RuvA tetramers; dsDNA enters through RuvA and exits via RuvB. An RuvB hexamer assembles on each DNA strand where it exits the tetramer. Each RuvB hexamer is contacted by two RuvA subunits (via domain III) on 2 adjacent RuvB subunits; this complex drives branch migration. In the full resolvosome a probable DNA-RuvA(4)-RuvB(12)-RuvC(2) complex forms which resolves the HJ.

It is found in the cytoplasm. Its function is as follows. The RuvA-RuvB-RuvC complex processes Holliday junction (HJ) DNA during genetic recombination and DNA repair, while the RuvA-RuvB complex plays an important role in the rescue of blocked DNA replication forks via replication fork reversal (RFR). RuvA specifically binds to HJ cruciform DNA, conferring on it an open structure. The RuvB hexamer acts as an ATP-dependent pump, pulling dsDNA into and through the RuvAB complex. HJ branch migration allows RuvC to scan DNA until it finds its consensus sequence, where it cleaves and resolves the cruciform DNA. The sequence is that of Holliday junction branch migration complex subunit RuvA from Halothermothrix orenii (strain H 168 / OCM 544 / DSM 9562).